Here is a 304-residue protein sequence, read N- to C-terminus: Virulence protein VirA (304 aa).

Could be involved in the biosynthesis of a major surface antigen important for virulence. The sequence is that of Virulence protein VirA (virA) from Vibrio anguillarum (strain ATCC 68554 / 775) (Listonella anguillarum).